Reading from the N-terminus, the 1534-residue chain is DNA-directed RNA polymerase subunit beta'' (1534 aa).

Zn(2+) contacts are provided by Cys220, Cys296, Cys303, and Cys306. Composition is skewed to basic and acidic residues over residues 644–668 (RTQE…RTRE) and 678–688 (PENKYRTREGE). Disordered regions lie at residues 644 to 698 (RTQE…EDEY) and 719 to 800 (YRTL…KKEG). Composition is skewed to acidic residues over residues 744 to 762 (GEYE…SSED) and 770 to 789 (TLEE…EYGS).

The protein belongs to the RNA polymerase beta' chain family. RpoC2 subfamily. As to quaternary structure, in plastids the minimal PEP RNA polymerase catalytic core is composed of four subunits: alpha, beta, beta', and beta''. When a (nuclear-encoded) sigma factor is associated with the core the holoenzyme is formed, which can initiate transcription. The cofactor is Zn(2+).

It is found in the plastid. The protein resides in the chloroplast. The catalysed reaction is RNA(n) + a ribonucleoside 5'-triphosphate = RNA(n+1) + diphosphate. Functionally, DNA-dependent RNA polymerase catalyzes the transcription of DNA into RNA using the four ribonucleoside triphosphates as substrates. In Saccharum hybrid (Sugarcane), this protein is DNA-directed RNA polymerase subunit beta''.